Here is a 558-residue protein sequence, read N- to C-terminus: Asparagine--tRNA ligase, cytoplasmic (558 aa).

Position 71 is a phosphoserine (serine 71). Residues 79-101 (MWHREQMKSESREKKEAEDSLRR) form a disordered region. Over residues 81–101 (HREQMKSESREKKEAEDSLRR) the composition is skewed to basic and acidic residues. N6-acetyllysine is present on residues lysine 254 and lysine 500.

This sequence belongs to the class-II aminoacyl-tRNA synthetase family. Homodimer.

The protein resides in the cytoplasm. The catalysed reaction is tRNA(Asn) + L-asparagine + ATP = L-asparaginyl-tRNA(Asn) + AMP + diphosphate + H(+). In terms of biological role, catalyzes the attachment of asparagine to tRNA(Asn) in a two-step reaction: asparagine is first activated by ATP to form Asn-AMP and then transferred to the acceptor end of tRNA(Asn). In addition to its essential role in protein synthesis, acts as a signaling molecule that induced migration of CCR3-expressing cells. Has an essential role in the development of the cerebral cortex, being required for proper proliferation of radial glial cells. In Macaca fascicularis (Crab-eating macaque), this protein is Asparagine--tRNA ligase, cytoplasmic.